The sequence spans 332 residues: Anthranilate phosphoribosyltransferase (332 aa).

5-phospho-alpha-D-ribose 1-diphosphate-binding positions include Gly-78, 81-82 (GD), Thr-86, 88-91 (NVST), 106-114 (KHGNRAASS), and Ala-118. Anthranilate is bound at residue Gly-78. Ser-90 contributes to the Mg(2+) binding site. Asn-109 is an anthranilate binding site. Arg-164 contacts anthranilate. Residues Asp-223 and Glu-224 each coordinate Mg(2+).

It belongs to the anthranilate phosphoribosyltransferase family. In terms of assembly, homodimer. The cofactor is Mg(2+).

The catalysed reaction is N-(5-phospho-beta-D-ribosyl)anthranilate + diphosphate = 5-phospho-alpha-D-ribose 1-diphosphate + anthranilate. Its pathway is amino-acid biosynthesis; L-tryptophan biosynthesis; L-tryptophan from chorismate: step 2/5. In terms of biological role, catalyzes the transfer of the phosphoribosyl group of 5-phosphorylribose-1-pyrophosphate (PRPP) to anthranilate to yield N-(5'-phosphoribosyl)-anthranilate (PRA). This chain is Anthranilate phosphoribosyltransferase, found in Sphingopyxis alaskensis (strain DSM 13593 / LMG 18877 / RB2256) (Sphingomonas alaskensis).